A 2031-amino-acid polypeptide reads, in one-letter code: Pericentriolar material 1 protein (2031 aa).

Disordered stretches follow at residues M1–P82 and D111–S165. The tract at residues M1–S484 is self-association. Positions R42–L58 are enriched in basic and acidic residues. Residues S114–R130 show a composition bias toward polar residues. A compositionally biased stretch (basic and acidic residues) spans N149–S162. Residues R302–D394 adopt a coiled-coil conformation. Over residues S469–N494 the composition is skewed to polar residues. Residues S469–R495 are disordered. Residues A523–T549 adopt a coiled-coil conformation. Disordered stretches follow at residues S550–Y590 and K649–A678. Positions K562 to E580 are enriched in acidic residues. Composition is skewed to polar residues over residues P581–Y590 and S667–V677. Residues V684–G711 adopt a coiled-coil conformation. Positions D712–Q752 are disordered. Over residues T736 to K750 the composition is skewed to polar residues. The interval R745–A1271 is self-association and localization to centrosomes. Residues L757–Q805 are a coiled coil. 2 stretches are compositionally biased toward polar residues: residues L806 to M823 and Q888 to S898. Disordered regions lie at residues L806–N835 and A882–R1014. Residues S858–E892 are a coiled coil. Residues L930–L945 are compositionally biased toward acidic residues. Composition is skewed to polar residues over residues N960–R981 and K1004–M1013. A coiled-coil region spans residues L1025 to T1049. 4 disordered regions span residues Q1123 to N1146, K1219 to R1247, S1318 to K1345, and P1514 to S1533. Composition is skewed to basic and acidic residues over residues G1127–G1136 and F1221–R1247. Positions K1331–K1345 are enriched in basic residues. Residues G1524–S1533 are compositionally biased toward polar residues. Residues H1550–Q1599 are a coiled coil. Disordered regions lie at residues A1746–E1802, A1817–I1870, N1922–D1965, and E2007–A2031. Residues K1771–D1784 show a composition bias toward basic and acidic residues. Residues G1824–E1835 show a composition bias toward acidic residues. Composition is skewed to polar residues over residues V1843–E1852 and N1922–E1942.

This sequence belongs to the PCM1 family. Self-associates. Interacts with cetn3.

It localises to the cytoplasm. Its subcellular location is the cytoskeleton. It is found in the microtubule organizing center. The protein resides in the centrosome. The protein localises to the cytoplasmic granule. It localises to the centriolar satellite. Its subcellular location is the cilium basal body. In terms of biological role, required to anchor microtubules to the centrosome. Required for centrosome assembly and function. Essential for the correct localization of several centrosomal proteins including cetn3 and pcnt. Probably involved in the biogenesis of cilia. The polypeptide is Pericentriolar material 1 protein (pcm1) (Xenopus laevis (African clawed frog)).